The primary structure comprises 257 residues: Thioredoxin-dependent peroxide reductase, mitochondrial (257 aa).

The N-terminal 62 residues, 1–62 (MAAAAGRLLW…FAFSTSSSFH (62 aa)), are a transit peptide targeting the mitochondrion. The Thioredoxin domain occupies 64–222 (PAVTQHAPHF…PLRLVKAFQF (159 aa)). K84 carries the post-translational modification N6-succinyllysine. At K92 the chain carries N6-acetyllysine; alternate. Position 92 is an N6-succinyllysine; alternate (K92). C109 acts as the Cysteine sulfenic acid (-SOH) intermediate in catalysis. Residue T147 is modified to Phosphothreonine.

Belongs to the peroxiredoxin family. AhpC/Prx1 subfamily. As to quaternary structure, homodimer; disulfide-linked, upon oxidation. 6 homodimers assemble to form a ring-like dodecamer. Interacts with NEK6. Interacts with LRRK2. Interacts with MAP3K13. Interacts with RPS6KC1 (via PX domain). In terms of processing, phosphorylated by LRRK2; phosphorylation reduces perodixase activity. Post-translationally, the enzyme can be inactivated by further oxidation of the cysteine sulfenic acid (C(P)-SOH) to sulphinic acid (C(P)-SO2H) and sulphonic acid (C(P)-SO3H) instead of its condensation to a disulfide bond. S-palmitoylated. Ubiquitous.

It localises to the mitochondrion. The protein resides in the cytoplasm. The protein localises to the early endosome. It catalyses the reaction a hydroperoxide + [thioredoxin]-dithiol = an alcohol + [thioredoxin]-disulfide + H2O. Functionally, thiol-specific peroxidase that catalyzes the reduction of hydrogen peroxide and organic hydroperoxides to water and alcohols, respectively. Plays a role in cell protection against oxidative stress by detoxifying peroxides. Acts synergistically with MAP3K13 to regulate the activation of NF-kappa-B in the cytosol. Required for the maintenance of physical strength. The protein is Thioredoxin-dependent peroxide reductase, mitochondrial (Prdx3) of Rattus norvegicus (Rat).